The chain runs to 629 residues: DNA mismatch repair protein MutL (629 aa).

It belongs to the DNA mismatch repair MutL/HexB family.

Functionally, this protein is involved in the repair of mismatches in DNA. It is required for dam-dependent methyl-directed DNA mismatch repair. May act as a 'molecular matchmaker', a protein that promotes the formation of a stable complex between two or more DNA-binding proteins in an ATP-dependent manner without itself being part of a final effector complex. This Rhodospirillum rubrum (strain ATCC 11170 / ATH 1.1.1 / DSM 467 / LMG 4362 / NCIMB 8255 / S1) protein is DNA mismatch repair protein MutL.